The following is a 155-amino-acid chain: MQVKIESLAAQPLFALRVQGPFAQSLGPGFERLMAWSTRHGLQGQWMALYYDNPREVAPEALRADVALTTATTALPSDGEASGIRWDTLAGGLYALAQVRVIDNDFATPWVALFDQALPASGYRPDGGPCFERYLSDGRASGEWLLELGVPVRKS.

It belongs to the DNA gyrase inhibitor family. As to quaternary structure, interacts with DNA gyrase.

Its subcellular location is the cytoplasm. Inhibits the supercoiling activity of DNA gyrase. Acts by inhibiting DNA gyrase at an early step, prior to (or at the step of) binding of DNA by the gyrase. It protects cells against toxins that target DNA gyrase, by inhibiting activity of these toxins and reducing the formation of lethal double-strand breaks in the cell. This is DNA gyrase inhibitor from Edwardsiella piscicida.